The chain runs to 119 residues: Ribonuclease P protein component (119 aa).

This sequence belongs to the RnpA family. As to quaternary structure, consists of a catalytic RNA component (M1 or rnpB) and a protein subunit.

The catalysed reaction is Endonucleolytic cleavage of RNA, removing 5'-extranucleotides from tRNA precursor.. Its function is as follows. RNaseP catalyzes the removal of the 5'-leader sequence from pre-tRNA to produce the mature 5'-terminus. It can also cleave other RNA substrates such as 4.5S RNA. The protein component plays an auxiliary but essential role in vivo by binding to the 5'-leader sequence and broadening the substrate specificity of the ribozyme. This is Ribonuclease P protein component from Listeria innocua serovar 6a (strain ATCC BAA-680 / CLIP 11262).